We begin with the raw amino-acid sequence, 142 residues long: Large ribosomal subunit protein uL13 (142 aa).

It belongs to the universal ribosomal protein uL13 family. As to quaternary structure, part of the 50S ribosomal subunit.

Functionally, this protein is one of the early assembly proteins of the 50S ribosomal subunit, although it is not seen to bind rRNA by itself. It is important during the early stages of 50S assembly. The polypeptide is Large ribosomal subunit protein uL13 (Azoarcus sp. (strain BH72)).